Reading from the N-terminus, the 144-residue chain is F420-non-reducing hydrogenase vhc iron-sulfur subunit D (144 aa).

The protein belongs to the MvhD/VhuD family. In terms of assembly, the F420-non-reducing hydrogenase vhc is composed of three subunits; VhcA, VhcD and VhcG. It depends on [2Fe-2S] cluster as a cofactor.

This is F420-non-reducing hydrogenase vhc iron-sulfur subunit D (vhcD) from Methanococcus voltae.